The primary structure comprises 538 residues: MHITNLGLHQVSFQSGDSYKGAEETGKHKGVSVISYQRVKNGERNKGIEALNRLYLQNQTSLTGKSLLFARDKAEVFCEAIKLAGGDTSKIKAMMERLDTYKLGEVNKRHINELNKVISEEIRAQLGIKNKKELQTKIKQIFTDYLNNKNWGPVNKNISHHGKNYSFQLTPASHMKIGNKNIFVKEYNGKGICCASTRERDHIANMWLSKVVDDEGKEIFSGIRHGVISAYGLKKNSSERAVAARNKAEELVSAALYSRPELLSQALSGKTVDLKIVSTSLLTPTSLTGGEESMLKDQVSALKGLNSKRGGPTKLLIRNSDGLLKEVSVNLKVVTFNFGVNELALKMGLGWRNVDKLNDESICSLLGDNFLKNGVIGGWAAEAIEKNPPCKNDVIYLANQIKEIVNNKLQKNDNGEPYKLSQRVTLLAYTIGAVPCWNCKSGKDRTGMQDAEIKREIIRKHETGQFSQLNSKLSSEEKRLFSTILMNSGNMEIQEMNTGVPGNKVMKKLPLSSLELSYSERIGDPKIWNMVKGYSSFV.

Cys439 is an active-site residue. Positions 439-445 match the CX5R motif motif; that stretch reads CKSGKDR.

The protein belongs to the phosphatase IpgD/SopB family.

The protein localises to the secreted. It catalyses the reaction a 1,2-diacyl-sn-glycero-3-phospho-(1D-myo-inositol-4,5-bisphosphate) + H2O = a 1,2-diacyl-sn-glycero-3-phospho-(1D-myo-inositol-5-phosphate) + phosphate. In terms of biological role, converts phosphatidylinositol 4,5-bisphosphate (PtdIns 4,5-P2) to PtdIns 5-P. IpgD is injected by Shigella into the host cell and is required for invasion. The accumulation of PtdIns 5-P causes membrane ruffling and actin cytoskeleton rearrangements at the entry site. Acts in concert with IpaA to coordinate and control the membrane and cytoskeletal rearrangements induced early after invasion of the host cell. The protein is Inositol phosphate phosphatase IpgD (ipgD) of Shigella flexneri.